The sequence spans 154 residues: Protein X (154 aa).

Residues 68–117 (PCALRFTSARCMETTVNAHQILPKVLYKRTLGLPAMSTTDLEAYFKDCVF) are mitochondrial targeting sequence.

The protein belongs to the orthohepadnavirus protein X family. In terms of assembly, may form homodimer. May interact with host CEBPA, CFLAR, CREB1, DDB1, E4F1, HBXIP, HSPD1/HSP60, NFKBIA, POLR2E and SMAD4. Interacts with host SMC5-SMC6 complex and induces its degradation. Interacts with host TRPC4AP; leading to prevent ubiquitination of TRPC4AP. Interacts with host PLSCR1; this interaction promotes ubiquitination and degradation of HBx and impairs HBx-mediated cell proliferation. A fraction may be phosphorylated in insect cells and HepG2 cells, a human hepatoblastoma cell line. Phosphorylated in vitro by host protein kinase C or mitogen-activated protein kinase. N-acetylated in insect cells.

The protein localises to the host cytoplasm. Its subcellular location is the host nucleus. It is found in the host mitochondrion. Multifunctional protein that plays a role in silencing host antiviral defenses and promoting viral transcription. Does not seem to be essential for HBV infection. May be directly involved in development of cirrhosis and liver cancer (hepatocellular carcinoma). Most of cytosolic activities involve modulation of cytosolic calcium. The effect on apoptosis is controversial depending on the cell types in which the studies have been conducted. May induce apoptosis by localizing in mitochondria and causing loss of mitochondrial membrane potential. May also modulate apoptosis by binding host CFLAR, a key regulator of the death-inducing signaling complex (DISC). Promotes viral transcription by using the host E3 ubiquitin ligase DDB1 to target the SMC5-SMC6 complex to proteasomal degradation. This host complex would otherwise bind to viral episomal DNA, and prevents its transcription. Moderately stimulates transcription of many different viral and cellular transcription elements. Promoters and enhancers stimulated by HBx contain DNA binding sites for NF-kappa-B, AP-1, AP-2, c-EBP, ATF/CREB, or the calcium-activated factor NF-AT. The polypeptide is Protein X (Homo sapiens (Human)).